The chain runs to 442 residues: MDAWPRCLERLEAEFPPEDVHTWLKPLQAEDRGDSIVLYAPNAFIVEQVRERYLPRIRELLAYFAGNGEVALAVGSRPRAPEPLPAPQAVASAPAAAPIVPFAGNLDSHYTFANFVEGRSNQLGLAAAIQAAQKPGDRAHNPLLLYGSTGLGKTHLMFAAGNALRQANPAAKVMYLRSEQFFSAMIRALQDKAMDQFKRQFQQIDALLIDDIQFFAGKDRTQEEFFHTFNALFDGRQQIILTCDRYPREVEGLEPRLKSRLAWGLSVAIDPPDFETRAAIVLAKARERGAEIPDDVAFLIAKKMRSNVRDLEGALNTLVARANFTGRSITVEFAQETLRDLLRAQQQAIGIPNIQKTVADYYGLQMKDLLSKRRTRSLARPRQVAMALAKELTEHSLPEIGDAFAGRDHTTVLHACRQIRTLMEADGKLREDWEKLIRKLSE.

Positions 1-75 are domain I, interacts with DnaA modulators; it reads MDAWPRCLER…GNGEVALAVG (75 aa). Residues 75-104 are domain II; the sequence is GSRPRAPEPLPAPQAVASAPAAAPIVPFAG. Residues 105-322 form a domain III, AAA+ region region; the sequence is NLDSHYTFAN…GALNTLVARA (218 aa). Residues G150, G152, K153, and T154 each contribute to the ATP site. The tract at residues 323 to 442 is domain IV, binds dsDNA; that stretch reads NFTGRSITVE…WEKLIRKLSE (120 aa).

Belongs to the DnaA family. As to quaternary structure, oligomerizes as a right-handed, spiral filament on DNA at oriC.

Its subcellular location is the cytoplasm. Functionally, plays an essential role in the initiation and regulation of chromosomal replication. ATP-DnaA binds to the origin of replication (oriC) to initiate formation of the DNA replication initiation complex once per cell cycle. Binds the DnaA box (a 9 base pair repeat at the origin) and separates the double-stranded (ds)DNA. Forms a right-handed helical filament on oriC DNA; dsDNA binds to the exterior of the filament while single-stranded (ss)DNA is stabiized in the filament's interior. The ATP-DnaA-oriC complex binds and stabilizes one strand of the AT-rich DNA unwinding element (DUE), permitting loading of DNA polymerase. After initiation quickly degrades to an ADP-DnaA complex that is not apt for DNA replication. Binds acidic phospholipids. This Xanthomonas campestris pv. campestris (strain B100) protein is Chromosomal replication initiator protein DnaA.